The chain runs to 478 residues: Ubiquitin carboxyl-terminal hydrolase calypso (478 aa).

Residues 11 to 239 (GWLELESDPG…IRFNLMAVVP (229 aa)) enclose the UCH catalytic domain. The active-site Nucleophile is cysteine 97. The Proton donor role is filled by histidine 176. The 29-residue stretch at 400–428 (NYDEFICTFLSMLAHQGELGDLVSQHLIT) folds into the ULD domain. Residues 430–478 (RKPNMGSVQNSGSRGVVRNYNKKTTTNGSSPKTPSSKRRRGRTKYRKRK) are positively charged C-terminal tail required for binding nucleosomes. Residues 432–442 (PNMGSVQNSGS) are compositionally biased toward polar residues. The interval 432–478 (PNMGSVQNSGSRGVVRNYNKKTTTNGSSPKTPSSKRRRGRTKYRKRK) is disordered. Residues 464 to 478 (SSKRRRGRTKYRKRK) are compositionally biased toward basic residues.

This sequence belongs to the peptidase C12 family. BAP1 subfamily. As to quaternary structure, catalytic component of the polycomb repressive deubiquitinase (PR-DUB) complex, at least composed of caly/calypso, Asx and sba (MBD5/6 homolog). The PR-DUB complex associates with nucleosomes to mediate deubiquitination of histone H2AK118ub1 substrates; the association requires the positively charged C-terminal tail of caly, probably due to direct binding of DNA. Interacts (via ULD domain) with Asx (via DEUBAD domain); the interaction produces a stable heterodimer with a composite binding site for ubiquitin. Homodimerizes (via coiled-coil hinge-region between the UCH and ULD domains) to mediate assembly of 2 copies of the caly-Asx heterodimer into a bisymmetric tetramer; dimerization enhances PR-DUB association with nucleosomes.

The protein resides in the nucleus. The catalysed reaction is Thiol-dependent hydrolysis of ester, thioester, amide, peptide and isopeptide bonds formed by the C-terminal Gly of ubiquitin (a 76-residue protein attached to proteins as an intracellular targeting signal).. In terms of biological role, catalytic component of the polycomb repressive deubiquitinase (PR-DUB) complex, a complex that specifically mediates deubiquitination of histone H2A monoubiquitinated at 'Lys-119' (H2AK118ub1). Mediates bisymmetric organization of the PR-DUB complex and is involved in association with nucleosomes to mediate deubiquitination. Does not deubiquitinate monoubiquitinated histone H2B. Required to maintain the transcriptionally repressive state of homeotic genes throughout development. The PR-DUB complex has weak or no activity toward 'Lys-48'- and 'Lys-63'-linked polyubiquitin chains. Polycomb group (PcG) protein. In Aedes aegypti (Yellowfever mosquito), this protein is Ubiquitin carboxyl-terminal hydrolase calypso.